The following is a 151-amino-acid chain: MISVLGLDLGRKRIGVAGCDRLGQLATGITTIYRRNFASDVAQLRRICQERGVEKLIVGLPYTLDGQLGSQARQVQHLAEKIGAALNLPVEYIDERLTSFQAEEILKQRRRSPRHHKDLVDQIAAALILQQWLDARSQTAKATLAAGDPQL.

This sequence belongs to the YqgF nuclease family.

It is found in the cytoplasm. Its function is as follows. Could be a nuclease involved in processing of the 5'-end of pre-16S rRNA. This is Putative pre-16S rRNA nuclease from Thermosynechococcus vestitus (strain NIES-2133 / IAM M-273 / BP-1).